Consider the following 144-residue polypeptide: uncharacterized protein (144 aa).

An N-terminal signal peptide occupies residues M1–Y23.

This is an uncharacterized protein from Archaeoglobus fulgidus (strain ATCC 49558 / DSM 4304 / JCM 9628 / NBRC 100126 / VC-16).